Consider the following 483-residue polypeptide: MFS-type transporter ppzB (483 aa).

Transmembrane regions (helical) follow at residues 18 to 38 (FILT…GILL), 62 to 82 (AFLA…GWAA), 96 to 116 (MFLV…LLVV), 149 to 169 (IGTI…LGGV), and 178 to 198 (AVFA…ALVI). A glycan (N-linked (GlcNAc...) asparagine) is linked at asparagine 219. 6 helical membrane passes run 281–301 (LAML…ATVP), 310–330 (FSSL…FALG), 344–364 (AAAT…GLPE), 374–394 (VALF…VTSP), 424–444 (FGFS…LGGF), and 453–473 (VMGA…FLFV).

This sequence belongs to the major facilitator superfamily. TCR/Tet family.

The protein localises to the membrane. MFS-type transporter; part of the gene cluster that mediates the biosynthesis of pyrrolopyrazines, secondary metabolites showing insecticidal activity. Probably involved in the secretion of peramine and other pyrrolopyrazines. The sequence is that of MFS-type transporter ppzB from Metarhizium rileyi (strain RCEF 4871) (Nomuraea rileyi).